We begin with the raw amino-acid sequence, 226 residues long: Uracil-DNA glycosylase (226 aa).

The active-site Proton acceptor is the aspartate 64.

The protein belongs to the uracil-DNA glycosylase (UDG) superfamily. UNG family.

Its subcellular location is the cytoplasm. It carries out the reaction Hydrolyzes single-stranded DNA or mismatched double-stranded DNA and polynucleotides, releasing free uracil.. Functionally, excises uracil residues from the DNA which can arise as a result of misincorporation of dUMP residues by DNA polymerase or due to deamination of cytosine. In Vibrio parahaemolyticus serotype O3:K6 (strain RIMD 2210633), this protein is Uracil-DNA glycosylase.